Here is a 416-residue protein sequence, read N- to C-terminus: MSSNCTSTTAVAVAPLSASKTKTKKKHFVCQKVKLFRASEPILSVLMWGVNHTINELSNVPVPVMLMPDDFKAYSKIKVDNHLFNKENLPSRFKFKEYCPMVFRNLRERFGIDDQDYQNSVTRSAPINSDSQGRCGTRFLTTYDRRFVIKTVSSEDVAEMHNILKKYHQFIVECHGNTLLPQFLGMYRLTVDGVETYMVVTRNVFSHRLTVHRKYDLKGSTVAREASDKEKAKDLPTFKDNDFLNEGQKLHVGEESKKNFLEKLKRDVEFLAQLKIMDYSLLVGIHDVDRAEQEEMEVEERAEEEECENDGVGGSLLCSYGTPPDSPGNLLSFPRFFGPGEFDPSVDVYAMKSHESAPKKEVYFMAIIDILTPYDAKKKAAHAAKTVKHGAGAEISTVNPEQYSKRFNEFMSNILT.

Ser-2 is subject to N-acetylserine. Thr-8 bears the Phosphothreonine mark. Residue Ser-19 is modified to Phosphoserine. Residues 38-415 (ASEPILSVLM…RFNEFMSNIL (378 aa)) form the PIPK domain. The required for interaction with PIP5K1A stretch occupies residues 64–70 (VMLMPDD). N6-acetyllysine is present on residues Lys-94 and Lys-150. ATP-binding positions include 202–204 (RNV) and Lys-214. GTP-binding positions include 203–204 (NV) and Lys-214. Thr-322 is subject to Phosphothreonine. Ser-326 is subject to Phosphoserine. GTP is bound at residue Asp-369.

As to quaternary structure, homodimer. Binds TNFRSF1A. Interacts with PIP4K2A; the interaction suppresses ubiquitination by the SPOP/CUL3 complex. Probably interacts with PIP5K1A; the interaction inhibits PIP5K1A kinase activity. In terms of processing, ubiquitinated by the SPOP/CUL3 complex. Ubiquitination is stimulated by PtdIns5P levels. Phosphorylated on serine residues.

It localises to the endoplasmic reticulum membrane. It is found in the cell membrane. The protein localises to the nucleus. The protein resides in the cytoplasm. The catalysed reaction is a 1,2-diacyl-sn-glycero-3-phospho-(1D-myo-inositol-5-phosphate) + ATP = a 1,2-diacyl-sn-glycero-3-phospho-(1D-myo-inositol-4,5-bisphosphate) + ADP + H(+). The enzyme catalyses 1,2-dihexadecanoyl-sn-glycero-3-phospho-(1D-myo-inositol-5-phosphate) + ATP = 1,2-dihexadecanoyl-sn-glycero-3-phospho-(1D-myo-inositol-4,5-bisphosphate) + ADP + H(+). It carries out the reaction 1,2-dihexadecanoyl-sn-glycero-3-phospho-(1D-myo-inositol-5-phosphate) + GTP = 1,2-dihexadecanoyl-sn-glycero-3-phospho-(1D-myo-inositol-4,5-bisphosphate) + GDP + H(+). In terms of biological role, participates in the biosynthesis of phosphatidylinositol 4,5-bisphosphate. Preferentially utilizes GTP, rather than ATP, for PI(5)P phosphorylation and its activity reflects changes in direct proportion to the physiological GTP concentration. Its GTP-sensing activity is critical for metabolic adaptation. In collaboration with PIP4K2A, has a role in mediating autophagy in times of nutrient stress. Required for autophagosome-lysosome fusion and the regulation of cellular lipid metabolism. PIP4Ks negatively regulate insulin signaling through a catalytic-independent mechanism. They interact with PIP5Ks and suppress PIP5K-mediated PtdIns(4,5)P2 synthesis and insulin-dependent conversion to PtdIns(3,4,5)P3. This is Phosphatidylinositol 5-phosphate 4-kinase type-2 beta from Mus musculus (Mouse).